A 365-amino-acid polypeptide reads, in one-letter code: Endophilin-B1 (365 aa).

Met-1 is subject to N-acetylmethionine. The segment at 1–30 (MNIMDFNVKKLAADAGTFLSRAVQFTEEKL) is membrane-binding amphipathic helix. The interval 1–37 (MNIMDFNVKKLAADAGTFLSRAVQFTEEKLGQAEKTE) is required for membrane binding. Residues 27–261 (EEKLGQAEKT…LGSFPSNYHS (235 aa)) enclose the BAR domain. Residue Thr-145 is modified to Phosphothreonine; by CDK5. The stretch at 155–195 (YKTIAKERKLLQNKRLDLDAAKTRLKKAKAAETRASSEQEL) forms a coiled coil. The 61-residue stretch at 305–365 (GGSRRARVLY…VPITYLELLN (61 aa)) folds into the SH3 domain.

This sequence belongs to the endophilin family. As to quaternary structure, homodimer, and heterodimer with SH3GLB2. Binds BAX; induction of apoptosis augments BAX binding. Binds DNM1, HTT, AMPH, BIN1 and ARFGAP1. Interacts with UVRAG; UVRAG bridges the interaction to BECN1 indicative for an association with the PI3K complex II (PI3KC3-C2). Phosphorylated at Thr-145 by CDK5; this phosphorylation is required for autophagy induction in starved neurons and facilitates homodimerization.

The protein localises to the cytoplasm. It localises to the golgi apparatus membrane. It is found in the mitochondrion outer membrane. Its subcellular location is the cytoplasmic vesicle. The protein resides in the autophagosome membrane. The protein localises to the midbody. Functionally, may be required for normal outer mitochondrial membrane dynamics. Required for coatomer-mediated retrograde transport in certain cells. May recruit other proteins to membranes with high curvature. May promote membrane fusion. Involved in activation of caspase-dependent apoptosis by promoting BAX/BAK1 activation. Involved in caspase-independent apoptosis during nutrition starvation and involved in the regulation of autophagy. Activates lipid kinase activity of PIK3C3 during autophagy probably by associating with the PI3K complex II (PI3KC3-C2). Associated with PI3KC3-C2 during autophagy may regulate the trafficking of ATG9A from the Golgi complex to the peripheral cytoplasm for the formation of autophagosomes by inducing Golgi membrane tubulation and fragmentation. Involved in regulation of degradative endocytic trafficking and cytokinesis, probably in the context of PI3KC3-C2. This Bos taurus (Bovine) protein is Endophilin-B1 (SH3GLB1).